Consider the following 345-residue polypeptide: Tryptophan--tRNA ligase (345 aa).

ATP-binding positions include 12–14 (RPT) and 20–21 (GH). The 'HIGH' region signature appears at 13–21 (PTGKLHLGH). Residue Asp144 participates in L-tryptophan binding. ATP is bound by residues 156 to 158 (GKD), Leu194, and 202 to 206 (KMSKS). The 'KMSKS' region signature appears at 202 to 206 (KMSKS).

The protein belongs to the class-I aminoacyl-tRNA synthetase family. In terms of assembly, homodimer.

The protein localises to the cytoplasm. The catalysed reaction is tRNA(Trp) + L-tryptophan + ATP = L-tryptophyl-tRNA(Trp) + AMP + diphosphate + H(+). Functionally, catalyzes the attachment of tryptophan to tRNA(Trp). The polypeptide is Tryptophan--tRNA ligase (Chlamydia caviae (strain ATCC VR-813 / DSM 19441 / 03DC25 / GPIC) (Chlamydophila caviae)).